Consider the following 540-residue polypeptide: MAKDPGRVLIFDTTLRDGEQSPGASLNLEEKLAIAQQLARLGVDVIEAGFPFASAGDFAAVQRIAQQVGGENGPIICGLARASQRDIKACAEAVSPAPRRRIHTFIATSDIHLEHKLRKSRADVLGIVPEMVSYARSLMDDIEFSCEDAGRSDPEFLYEVIEAAIAAGATTINIPDTVGYTTPSEFGDLIAGINRYVPNIGEAVLSVHGHNDLGLAVANFLEAVKNGARQLECTINGIGERAGNASLEELVMALHVRRRYFNPFFGRDQDSPTPLSAVRTEELTKTSRLVSNLTGMVVQPNKAIVGANAFAHESGIHQDGVLKNRLTYEIIDAKTVGLSDNRISLGKLSGRSAVRARLEELGYDLTREDLDEAFARFKDLADRKREITDRDLEAIVSEQVQQPEARYQLQLVQVSCGTRLKPTATVALSEENGPDQTVSAVGTGPVDAVCRALNQLAGVPNELIEFSVKSVTEGIDAMGEVTIRLRRDGSLYSGHAADTDVVVAAAMAFINALNRLVAAQEHQPLHPQRDAVVLDARPTL.

The Pyruvate carboxyltransferase domain occupies 8–273 (VLIFDTTLRD…FFGRDQDSPT (266 aa)). D17, H208, H210, and N244 together coordinate Mn(2+). Positions 408–540 (QLQLVQVSCG…AVVLDARPTL (133 aa)) are regulatory domain.

It belongs to the alpha-IPM synthase/homocitrate synthase family. LeuA type 1 subfamily. As to quaternary structure, homodimer. Mn(2+) serves as cofactor.

It localises to the cytoplasm. It catalyses the reaction 3-methyl-2-oxobutanoate + acetyl-CoA + H2O = (2S)-2-isopropylmalate + CoA + H(+). It participates in amino-acid biosynthesis; L-leucine biosynthesis; L-leucine from 3-methyl-2-oxobutanoate: step 1/4. Catalyzes the condensation of the acetyl group of acetyl-CoA with 3-methyl-2-oxobutanoate (2-ketoisovalerate) to form 3-carboxy-3-hydroxy-4-methylpentanoate (2-isopropylmalate). This Parasynechococcus marenigrum (strain WH8102) protein is 2-isopropylmalate synthase.